The primary structure comprises 243 residues: Phosphoribosyl isomerase A (243 aa).

The Proton acceptor role is filled by Asp-10. Asp-129 acts as the Proton donor in catalysis.

The protein belongs to the HisA/HisF family.

Its subcellular location is the cytoplasm. It catalyses the reaction 1-(5-phospho-beta-D-ribosyl)-5-[(5-phospho-beta-D-ribosylamino)methylideneamino]imidazole-4-carboxamide = 5-[(5-phospho-1-deoxy-D-ribulos-1-ylimino)methylamino]-1-(5-phospho-beta-D-ribosyl)imidazole-4-carboxamide. It carries out the reaction N-(5-phospho-beta-D-ribosyl)anthranilate = 1-(2-carboxyphenylamino)-1-deoxy-D-ribulose 5-phosphate. The protein operates within amino-acid biosynthesis; L-histidine biosynthesis; L-histidine from 5-phospho-alpha-D-ribose 1-diphosphate: step 4/9. It participates in amino-acid biosynthesis; L-tryptophan biosynthesis; L-tryptophan from chorismate: step 3/5. In terms of biological role, involved in both the histidine and tryptophan biosynthetic pathways. The sequence is that of Phosphoribosyl isomerase A from Mycobacteroides abscessus (strain ATCC 19977 / DSM 44196 / CCUG 20993 / CIP 104536 / JCM 13569 / NCTC 13031 / TMC 1543 / L948) (Mycobacterium abscessus).